A 248-amino-acid chain; its full sequence is Ethylene-responsive transcription factor ERF026 (248 aa).

Residues 89–145 (VYRGIRCRSGKWVSEIREPKKTTRVWLGTYPTPEMAAAAYDVAALALKGGDTLLNFP) constitute a DNA-binding region (AP2/ERF). Residues 225–248 (PPWMGSPPSDDSPENSDGESLWSY) form a disordered region.

The protein belongs to the AP2/ERF transcription factor family. ERF subfamily.

Its subcellular location is the nucleus. In terms of biological role, probably acts as a transcriptional activator. Binds to the GCC-box pathogenesis-related promoter element. May be involved in the regulation of gene expression by stress factors and by components of stress signal transduction pathways. The chain is Ethylene-responsive transcription factor ERF026 (ERF026) from Arabidopsis thaliana (Mouse-ear cress).